Here is a 444-residue protein sequence, read N- to C-terminus: ATP-dependent protease ATPase subunit HslU (444 aa).

ATP is bound by residues Val-18, 60 to 65, Asp-258, Glu-323, and Arg-395; that span reads GVGKTE.

The protein belongs to the ClpX chaperone family. HslU subfamily. As to quaternary structure, a double ring-shaped homohexamer of HslV is capped on each side by a ring-shaped HslU homohexamer. The assembly of the HslU/HslV complex is dependent on binding of ATP.

It localises to the cytoplasm. Its function is as follows. ATPase subunit of a proteasome-like degradation complex; this subunit has chaperone activity. The binding of ATP and its subsequent hydrolysis by HslU are essential for unfolding of protein substrates subsequently hydrolyzed by HslV. HslU recognizes the N-terminal part of its protein substrates and unfolds these before they are guided to HslV for hydrolysis. The protein is ATP-dependent protease ATPase subunit HslU of Thioalkalivibrio sulfidiphilus (strain HL-EbGR7).